The sequence spans 525 residues: Mitochondrial-processing peptidase subunit alpha (525 aa).

Residues 1–33 constitute a mitochondrion transit peptide; that stretch reads MAAVVLAATRLLRGSGSWGCSRLRFGPPAYRRF. The residue at position 64 (Lys-64) is an N6-succinyllysine. Lys-299 carries the post-translational modification N6-acetyllysine.

This sequence belongs to the peptidase M16 family. As to quaternary structure, heterodimer of PMPCA (alpha) and PMPCB (beta) subunits, forming the mitochondrial processing protease (MPP) in which PMPCA is involved in substrate recognition and binding and PMPCB is the catalytic subunit.

It is found in the mitochondrion matrix. It localises to the mitochondrion inner membrane. Its function is as follows. Substrate recognition and binding subunit of the essential mitochondrial processing protease (MPP), which cleaves the mitochondrial sequence off newly imported precursors proteins. The protein is Mitochondrial-processing peptidase subunit alpha (PMPCA) of Pongo abelii (Sumatran orangutan).